Here is a 142-residue protein sequence, read N- to C-terminus: Ribosome-binding factor A (142 aa).

The tract at residues 118-142 (DEAKQQEHGTVENAKQDGDKAEDDK) is disordered.

Belongs to the RbfA family. In terms of assembly, monomer. Binds 30S ribosomal subunits, but not 50S ribosomal subunits or 70S ribosomes.

It localises to the cytoplasm. In terms of biological role, one of several proteins that assist in the late maturation steps of the functional core of the 30S ribosomal subunit. Associates with free 30S ribosomal subunits (but not with 30S subunits that are part of 70S ribosomes or polysomes). Required for efficient processing of 16S rRNA. May interact with the 5'-terminal helix region of 16S rRNA. The protein is Ribosome-binding factor A of Shewanella piezotolerans (strain WP3 / JCM 13877).